A 798-amino-acid polypeptide reads, in one-letter code: uncharacterized protein (798 aa).

The first 22 residues, 1 to 22, serve as a signal peptide directing secretion; that stretch reads MKFKYGAIVFSGLLGVSAILAA. A lipid anchor (N-palmitoyl cysteine) is attached at cysteine 23. Cysteine 23 is lipidated: S-diacylglycerol cysteine. Over residues 178 to 192 the composition is skewed to basic and acidic residues; it reads SKGAQKDNKSAEVQR. Disordered regions lie at residues 178-204, 226-260, 443-463, and 478-515; these read SKGAQKDNKSAEVQRKSTGQKTVTQPL, NGKKKEEKKSTRSKRATEGTQTTKENTGGDAATSD, EVNAPESNNGNDGKQQGQSDQ, and SDIKVKPKTQAESKKSSDSKQTANTGKGSNSKQQTPKK. A compositionally biased stretch (polar residues) spans 193–204; that stretch reads KSTGQKTVTQPL. Over residues 226-235 the composition is skewed to basic and acidic residues; it reads NGKKKEEKKS. A compositionally biased stretch (basic and acidic residues) spans 478–495; that stretch reads SDIKVKPKTQAESKKSSD. Polar residues predominate over residues 496-515; the sequence is SKQTANTGKGSNSKQQTPKK.

Belongs to the MG185/MG260 family.

The protein resides in the cell membrane. This is an uncharacterized protein from Mycoplasma pneumoniae (strain ATCC 29342 / M129 / Subtype 1) (Mycoplasmoides pneumoniae).